A 252-amino-acid polypeptide reads, in one-letter code: Neurexophilin-3 (252 aa).

Residues 1–22 (MQLTRCCFVFLVQGSLYLVICG) form the signal peptide. Positions 23–75 (QDDGPPGSEDPERDDHEGQPRPRVPRKRGHISPKSRPMANSTLLGLLAPPGEA) are II. Positions 27 to 58 (PPGSEDPERDDHEGQPRPRVPRKRGHISPKSR) are disordered. A compositionally biased stretch (basic residues) spans 45 to 55 (RVPRKRGHISP). N-linked (GlcNAc...) asparagine glycosylation is found at N62, N127, N137, and N143. The tract at residues 76-157 (WGILGQPPNR…LVPPSKAVEF (82 aa)) is III. The tract at residues 158 to 166 (HQEQQIFIE) is IV (linker domain). A v (Cys-rich) region spans residues 167-252 (AKASKIFNCR…HSDTPYYPSG (86 aa)).

The protein belongs to the neurexophilin family. In terms of processing, may be proteolytically processed at the boundary between the N-terminal non-conserved and the central conserved domain in neuron-like cells. In terms of tissue distribution, highest level in brain.

Its subcellular location is the secreted. In terms of biological role, may be signaling molecules that resemble neuropeptides. Ligand for alpha-neurexins. This Homo sapiens (Human) protein is Neurexophilin-3 (NXPH3).